The primary structure comprises 106 residues: ATP-dependent Clp protease adapter protein ClpS (106 aa).

Belongs to the ClpS family. Binds to the N-terminal domain of the chaperone ClpA.

Functionally, involved in the modulation of the specificity of the ClpAP-mediated ATP-dependent protein degradation. The protein is ATP-dependent Clp protease adapter protein ClpS of Escherichia coli O127:H6 (strain E2348/69 / EPEC).